Here is a 354-residue protein sequence, read N- to C-terminus: Methylthioribose-1-phosphate isomerase (354 aa).

Substrate is bound by residues 58–60 (RGA), Arg101, and Gln204. Asp245 (proton donor) is an active-site residue. A substrate-binding site is contributed by 255–256 (NK).

It belongs to the eIF-2B alpha/beta/delta subunits family. MtnA subfamily.

It carries out the reaction 5-(methylsulfanyl)-alpha-D-ribose 1-phosphate = 5-(methylsulfanyl)-D-ribulose 1-phosphate. The protein operates within amino-acid biosynthesis; L-methionine biosynthesis via salvage pathway; L-methionine from S-methyl-5-thio-alpha-D-ribose 1-phosphate: step 1/6. In terms of biological role, catalyzes the interconversion of methylthioribose-1-phosphate (MTR-1-P) into methylthioribulose-1-phosphate (MTRu-1-P). This chain is Methylthioribose-1-phosphate isomerase, found in Xanthomonas oryzae pv. oryzae (strain MAFF 311018).